We begin with the raw amino-acid sequence, 37 residues long: MKVRASVKKICPECKVIRRKGVIRVICTNPKHKQRQR.

Belongs to the bacterial ribosomal protein bL36 family.

The polypeptide is Large ribosomal subunit protein bL36 (Leptospira biflexa serovar Patoc (strain Patoc 1 / Ames)).